The sequence spans 161 residues: S-ribosylhomocysteine lyase (161 aa).

Positions 57, 61, and 127 each coordinate Fe cation.

It belongs to the LuxS family. As to quaternary structure, homodimer. The cofactor is Fe cation.

It carries out the reaction S-(5-deoxy-D-ribos-5-yl)-L-homocysteine = (S)-4,5-dihydroxypentane-2,3-dione + L-homocysteine. Functionally, involved in the synthesis of autoinducer 2 (AI-2) which is secreted by bacteria and is used to communicate both the cell density and the metabolic potential of the environment. The regulation of gene expression in response to changes in cell density is called quorum sensing. Catalyzes the transformation of S-ribosylhomocysteine (RHC) to homocysteine (HC) and 4,5-dihydroxy-2,3-pentadione (DPD). The polypeptide is S-ribosylhomocysteine lyase (Streptococcus equi subsp. equi (strain 4047)).